Here is a 176-residue protein sequence, read N- to C-terminus: Ribosome maturation factor RimM (176 aa).

In terms of domain architecture, PRC barrel spans 93–168 (DDEVYIEDIL…TIRITPPPGL (76 aa)).

Belongs to the RimM family. As to quaternary structure, binds ribosomal protein uS19.

Its subcellular location is the cytoplasm. In terms of biological role, an accessory protein needed during the final step in the assembly of 30S ribosomal subunit, possibly for assembly of the head region. Essential for efficient processing of 16S rRNA. May be needed both before and after RbfA during the maturation of 16S rRNA. It has affinity for free ribosomal 30S subunits but not for 70S ribosomes. This is Ribosome maturation factor RimM from Oleidesulfovibrio alaskensis (strain ATCC BAA-1058 / DSM 17464 / G20) (Desulfovibrio alaskensis).